We begin with the raw amino-acid sequence, 358 residues long: tRNA-specific 2-thiouridylase MnmA (358 aa).

ATP-binding positions include 7-14 (AMSGGVDS) and L33. Residue C101 is the Nucleophile of the active site. Residues C101 and C197 are joined by a disulfide bond. G125 contributes to the ATP binding site. The segment at 147–149 (KDQ) is interaction with tRNA. Catalysis depends on C197, which acts as the Cysteine persulfide intermediate.

Belongs to the MnmA/TRMU family.

The protein resides in the cytoplasm. It catalyses the reaction S-sulfanyl-L-cysteinyl-[protein] + uridine(34) in tRNA + AH2 + ATP = 2-thiouridine(34) in tRNA + L-cysteinyl-[protein] + A + AMP + diphosphate + H(+). Its function is as follows. Catalyzes the 2-thiolation of uridine at the wobble position (U34) of tRNA, leading to the formation of s(2)U34. The chain is tRNA-specific 2-thiouridylase MnmA from Rickettsia typhi (strain ATCC VR-144 / Wilmington).